The following is a 42-amino-acid chain: Envelope protein P10 (42 aa).

Residues 20-40 (TTAAKIAVVYALVGLVGGLLL) traverse the membrane as a helical segment.

It is found in the virion membrane. In terms of biological role, involved in cell lysis. This chain is Envelope protein P10 (P10), found in Pseudomonas savastanoi pv. phaseolicola (Pseudomonas syringae pv. phaseolicola).